Here is a 202-residue protein sequence, read N- to C-terminus: MELWGAYLLLCLFSLLTQVTTEPPTQKPKKIVNAKKDVVNTKMFEELKSRLDTLAQEVALLKEQQALQTVCLKGTKVHMKCFLAFTQTKTFHEASEDCISRGGTLGTPQTGSENDALYEYLRQSVGNEAEIWLGLNDMAAEGTWVDMTGARIAYKNWETEITAQPDGGKTENCAVLSGAANGKWFDKRCRDQLPYICQFGIV.

The first 21 residues, 1 to 21 (MELWGAYLLLCLFSLLTQVTT), serve as a signal peptide directing secretion. An O-linked (GalNAc...) threonine glycan is attached at T25. 3 cysteine pairs are disulfide-bonded: C71-C81, C98-C197, and C173-C189. The C-type lectin domain occupies 77–198 (VHMKCFLAFT…CRDQLPYICQ (122 aa)).

Homotrimer. Found in plasma.

The protein localises to the secreted. Its function is as follows. Tetranectin binds to plasminogen and to isolated kringle 4. May be involved in the packaging of molecules destined for exocytosis. Plays a role in retinal function. This Homo sapiens (Human) protein is Tetranectin (CLEC3B).